A 606-amino-acid chain; its full sequence is Endonuclease 8-like 3 (606 aa).

Val2 serves as the catalytic Schiff-base intermediate with DNA; via amino nitrogen. Residues Asn193 and Arg272 each coordinate DNA. The FPG-type zinc finger occupies 248-282 (KVYKRPNCDQCHSKITVCRFGENSRMTYFCPHCQK). A RanBP2-type zinc finger spans residues 318–347 (SEEQWSCVVCTLINRPSAKACDACLTTRPL). Ser451 carries the post-translational modification Phosphoserine. Residues 479 to 494 (KSYNSGLSNSELQTNR) are compositionally biased toward polar residues. Residues 479-506 (KSYNSGLSNSELQTNRTRGHHSKSDGSP) are disordered. Residues Cys508, His511, Cys534, Cys542, Cys555, His557, Cys580, and Cys588 each contribute to the Zn(2+) site. 2 consecutive GRF-type zinc fingers follow at residues 508-551 (CKMH…ADLS) and 555-597 (CRHG…AENG).

The protein belongs to the FPG family. As to expression, expressed in testis, thymus, spleen and bone marrow. In young mice, expressed at higher levels in thymocytes than splenocytes. At 12 dpc, abundant in the subventricular zone (SVZ) of the lateral ventricles. At 17.5 dpc and P0, expression is limited to distinct cells in the cortical SVZ, in cells of the secondary matrix, the dentate gyrus migratory route and the dentate gyrus.

The protein localises to the nucleus. It localises to the chromosome. The catalysed reaction is 2'-deoxyribonucleotide-(2'-deoxyribose 5'-phosphate)-2'-deoxyribonucleotide-DNA = a 3'-end 2'-deoxyribonucleotide-(2,3-dehydro-2,3-deoxyribose 5'-phosphate)-DNA + a 5'-end 5'-phospho-2'-deoxyribonucleoside-DNA + H(+). DNA glycosylase which prefers single-stranded DNA (ssDNA), or partially ssDNA structures such as bubble and fork structures, to double-stranded DNA (dsDNA). Mediates interstrand cross-link repair in response to replication stress: acts by mediating DNA glycosylase activity, cleaving one of the two N-glycosyl bonds comprising the interstrand cross-link, which avoids the formation of a double-strand break but generates an abasic site that is bypassed by translesion synthesis polymerases. In vitro, displays strong glycosylase activity towards the hydantoin lesions spiroiminodihydantoin (Sp) and guanidinohydantoin (Gh) in both ssDNA and dsDNA; also recognizes FapyA, FapyG, 5-OHU, 5-OHC, 5-OHMH, Tg and 8-oxoA lesions in ssDNA. No activity on 8-oxoG detected. Also shows weak DNA-(apurinic or apyrimidinic site) lyase activity. In vivo, appears to be the primary enzyme involved in removing Sp and Gh from ssDNA in neonatal tissues. The chain is Endonuclease 8-like 3 (Neil3) from Mus musculus (Mouse).